An 876-amino-acid polypeptide reads, in one-letter code: E3 ubiquitin-protein ligase TRIM71 (876 aa).

An RING-type zinc finger spans residues 12–90 (CPLCKEMCGS…ALKLRCPICD (79 aa)). Positions 26–40 (SSNSSTSSSSSQTSG) are enriched in low complexity. Disordered stretches follow at residues 26 to 46 (SSNS…GGGG) and 128 to 192 (KNGR…AALL). Over residues 137-148 (PAAGSGAGGGGA) the composition is skewed to gly residues. Low complexity predominate over residues 160 to 182 (RAAAAASSPAAGSAAPSASSSSS). The segment at 200 to 247 (QGEPRCSSCDEGNAASSRCLDCQEHLCDNCVRAHQRVRLTKDHFIERF) adopts a B box-type 1; atypical zinc-finger fold. Zn(2+) contacts are provided by Cys-205, Cys-208, Cys-229, His-233, Cys-286, His-289, Cys-309, and His-314. A B box-type 2 zinc finger spans residues 281–322 (ERASYCQHHDDEVLHFYCDTCSVPICRECTMGRHVGHSFIYL). Coiled coils occupy residues 344–373 (RQAI…SEVK) and 399–434 (QVKA…EEGR). A Filamin repeat occupies 487–588 (SSGAFAPLTK…IENSPFKVVV (102 aa)). 6 NHL repeats span residues 601–644 (GLSF…FKPC), 648–691 (HHKF…FTFE), 695–738 (ILKF…FGPD), 742–785 (LNKY…IHAD), 789–832 (ARFL…FESN), and 836–876 (LCKF…ILVF).

This sequence belongs to the TRIM/RBCC family.

Its subcellular location is the cytoplasm. It is found in the P-body. The catalysed reaction is S-ubiquitinyl-[E2 ubiquitin-conjugating enzyme]-L-cysteine + [acceptor protein]-L-lysine = [E2 ubiquitin-conjugating enzyme]-L-cysteine + N(6)-ubiquitinyl-[acceptor protein]-L-lysine.. The protein operates within protein modification; protein ubiquitination. In terms of biological role, E3 ubiquitin-protein ligase that cooperates with the microRNAs (miRNAs) machinery and promotes embryonic stem cells proliferation and maintenance. Binds to miRNAs and participates in post-transcriptional repression of transcripts. Required to maintain proliferation and prevent premature differentiation of neural progenitor cells during early neural development. This Gallus gallus (Chicken) protein is E3 ubiquitin-protein ligase TRIM71 (TRIM71).